A 370-amino-acid polypeptide reads, in one-letter code: MKQKFVLPITPPSTAEKKPQTENRCNENLKPRRLLPQLKKSVRNRKPRLSYRPELNSVFDLDAYVDSTHLSKSQRHHMDRDAGFISYALNYSKRMVVVSGAGISVAAGIPDFRSSEGIFSTVNGGSGKDLFDYNRVYGDESMSLKFNQLMVSLFRLSKNCQPTKFHEMLNEFARDGRLLRLYTQNIDGLDTQLPHLSTNVPLAKPIPSTVQLHGSIKHMECNKCLNIKPFDPELFKCDDKFDSRTEIIPSCPQCEEYETVRKMAGLRSTGVGKLRPRVILYNEVHPEGDFIGEIANNDLKKRIDCLIIVGTSLKIPGVKNICRQFAAKVHANRGIVLYLNTSMPPKNVLDSLKFVDLVVLGDCQHVTSLL.

Residues 1-27 (MKQKFVLPITPPSTAEKKPQTENRCNE) form a disordered region. Residues 15–27 (AEKKPQTENRCNE) show a composition bias toward basic and acidic residues. In terms of domain architecture, Deacetylase sirtuin-type spans 75 to 370 (RHHMDRDAGF…GDCQHVTSLL (296 aa)). NAD(+) is bound by residues 100 to 119 (GAGI…EGIF) and 184 to 187 (QNID). Residue His-213 is the Proton acceptor of the active site. Zn(2+)-binding residues include Cys-221, Cys-224, Cys-251, and Cys-254. Residues 310-312 (GTS), 340-342 (NTS), and Cys-363 each bind NAD(+).

It belongs to the sirtuin family. Class I subfamily. Zn(2+) is required as a cofactor.

Its subcellular location is the nucleus. The enzyme catalyses N(6)-acetyl-L-lysyl-[protein] + NAD(+) + H2O = 2''-O-acetyl-ADP-D-ribose + nicotinamide + L-lysyl-[protein]. NAD-dependent histone deacetylase, which contributes together with HST3 to histone H3 'Lys-56' deacetylation, regulation of telomeric silencing, proper cell cycle progression, DNA damage control, DNA recombination, and genomic maintenance. This is NAD-dependent histone deacetylase HST4 (HST4) from Saccharomyces cerevisiae (strain ATCC 204508 / S288c) (Baker's yeast).